We begin with the raw amino-acid sequence, 464 residues long: MSLVDISGAYSLVPLPPPPPPLMRRRAPLPPPPPPPLMRRRAPPPPPPPLMRRRAPPPPPPPPLPRPCSRPPKTKCSLKPLHWVKKTRALPGSLWDELQRRQECRDIEDEQILCAIELSVSEIETIFSLGAKPKPKPEPEKVPLIDLRRATNTEIRLMLLNIRLPDMIAAAMAMDESRLDDFDQIENLINLFPTKEDMKFLLTYTGDKGNCEQLFQYLQEVVKVPRVESKLRVFSFKIQFGTQITKLTKGLNAVNSACEEIRTSQKLKDIMENILCLGNILNQGTGRGRAVGFRLDSLLILSETRADNSKMTLMHYLCKVLASKASDLLDFHKDLESLESASKIQLKSLAEEIQAITKGLEKLKQELTASETDGPVSQVFRKLLKEFISNAETQVATVMALYYPARGNAEALAHYFGYHYPFEQVTATLLSFIRLFKKAHEENVKQAELEKKKAAKEAEMEKTK.

The tract at residues 1–74 is disordered; sequence MSLVDISGAY…PRPCSRPPKT (74 aa). Residues 14 to 70 are compositionally biased toward pro residues; that stretch reads PLPPPPPPLMRRRAPLPPPPPPPLMRRRAPPPPPPPLMRRRAPPPPPPPPLPRPCSR. The FH2 domain maps to 68 to 462; that stretch reads CSRPPKTKCS…KAAKEAEMEK (395 aa).

The protein belongs to the formin-like family. Class-II subfamily.

This is Formin-like protein 19 (FH19) from Arabidopsis thaliana (Mouse-ear cress).